The chain runs to 252 residues: MLAKRIIPCLDVSAGRVVKGVNFVDLRDAGDPVEVARRYDAQGADEITFLDITASSDDRDIILHVVERVAEQVFIPLTVGGGVRSVEDVRRLLNAGADKVSINTAAVNNPSIVAEASGKVGSQCIVVAVDAKQTGPGKWEVFTHGGRNPTGLDAIEWARKVESLGAGEILLTSMDRDGTKIGFDLGLTRAVSDAVGIPVIASGGVGSLEHLADGVSEGRADAVLAASIFHFGQHTVREAKELMRTRGIEVRL.

Residues Asp-11 and Asp-130 contribute to the active site.

Belongs to the HisA/HisF family. As to quaternary structure, heterodimer of HisH and HisF.

The protein resides in the cytoplasm. The catalysed reaction is 5-[(5-phospho-1-deoxy-D-ribulos-1-ylimino)methylamino]-1-(5-phospho-beta-D-ribosyl)imidazole-4-carboxamide + L-glutamine = D-erythro-1-(imidazol-4-yl)glycerol 3-phosphate + 5-amino-1-(5-phospho-beta-D-ribosyl)imidazole-4-carboxamide + L-glutamate + H(+). It participates in amino-acid biosynthesis; L-histidine biosynthesis; L-histidine from 5-phospho-alpha-D-ribose 1-diphosphate: step 5/9. Its function is as follows. IGPS catalyzes the conversion of PRFAR and glutamine to IGP, AICAR and glutamate. The HisF subunit catalyzes the cyclization activity that produces IGP and AICAR from PRFAR using the ammonia provided by the HisH subunit. The sequence is that of Imidazole glycerol phosphate synthase subunit HisF from Azoarcus sp. (strain BH72).